Reading from the N-terminus, the 625-residue chain is Low affinity potassium transport system protein Kup (625 aa).

Transmembrane regions (helical) follow at residues 15–35, 58–78, 103–123, 140–160, 171–191, 218–238, 251–271, 282–302, 340–360, 366–386, 396–416, and 422–442; these read TIFSTINVLHGLIAISPIYII, IIFWTLFFIIFLKYLILIVSI, FVIVILGLISMCLFFGDIIII, LSFEKFIFIISIAIFTFLFFI, IFSFLISIWFILVGLIGLKGI, FFVFGTLILLISISEILYINI, LFFVFPMIMINCFGQGSIILL, FLVPDWARFFTFTFAIIISII, IYIPCINWIFYLSAVIQISIF, LILIYGIGSIITMSLTTFFSL, FKILKITFLLTILILEFFIFI, and IICGGWFPIVFGIIFFTIMIT.

It belongs to the HAK/KUP transporter (TC 2.A.72) family.

The protein localises to the cell membrane. The catalysed reaction is K(+)(in) + H(+)(in) = K(+)(out) + H(+)(out). Functionally, responsible for the low-affinity transport of potassium into the cell. Likely operates as a K(+):H(+) symporter. In Wigglesworthia glossinidia brevipalpis, this protein is Low affinity potassium transport system protein Kup.